A 590-amino-acid polypeptide reads, in one-letter code: Kinetochore protein ndc-80 (590 aa).

Coiled coils occupy residues 269 to 342 and 450 to 525; these read KGNE…KQIH and ELET…MKLD.

The protein belongs to the NDC80/HEC1 family. As to quaternary structure, component of the NDC80 complex, which is composed of at least ndc-80 and him-10. The NDC80 complex interacts with knl-1. Interacts with the RZZ complex components rod-1 (via N-terminus) and zwl-1.

It localises to the nucleus. The protein localises to the chromosome. Its subcellular location is the centromere. It is found in the kinetochore. The protein resides in the cytoplasm. It localises to the cytoskeleton. Acts as a component of the essential kinetochore-associated ndc-80 complex, which is required for chromosome segregation in mitosis and meiosis and spindle checkpoint activity. Plays a role in kinetochore assembly and recruits the checkpoint protein mdf-2 and the spindly-like protein spdl-1 to unattached kinetochores. Mediates the formation of end-on kinetochore-microtubule attachments through recruitment of spdl-1. The ndc-80 complex synergistically enhances the affinity of the ska-1 complex for microtubules and may allow the ndc-80 complex to track depolymerizing microtubules. In Caenorhabditis elegans, this protein is Kinetochore protein ndc-80 (ndc-80).